The primary structure comprises 629 residues: Transmembrane 9 superfamily protein C1105.08 (629 aa).

An N-terminal signal peptide occupies residues M1–S26. The Lumenal portion of the chain corresponds to F27–W266. An N-linked (GlcNAc...) asparagine glycan is attached at N157. A helical membrane pass occupies residues I267–L287. Residues Y288–T337 are Cytoplasmic-facing. Residues G338–A358 form a helical membrane-spanning segment. At P359–S364 the chain is on the lumenal side. A helical membrane pass occupies residues L365–A385. The Cytoplasmic portion of the chain corresponds to L386 to L401. The chain crosses the membrane as a helical span at residues L402–F422. Residues W423 to W436 are Lumenal-facing. A helical transmembrane segment spans residues L437 to I457. At G458–P488 the chain is on the cytoplasmic side. The helical transmembrane segment at S489–L509 threads the bilayer. Topologically, residues D510–F519 are lumenal. A helical membrane pass occupies residues M520–Y544. At F545–S558 the chain is on the cytoplasmic side. A helical membrane pass occupies residues F559–F579. At K580–L598 the chain is on the lumenal side. Residues I599 to V619 form a helical membrane-spanning segment. Residues N620–D629 are Cytoplasmic-facing.

It belongs to the nonaspanin (TM9SF) (TC 9.A.2) family.

The protein resides in the golgi apparatus membrane. The protein localises to the vacuole membrane. The polypeptide is Transmembrane 9 superfamily protein C1105.08 (Schizosaccharomyces pombe (strain 972 / ATCC 24843) (Fission yeast)).